Consider the following 272-residue polypeptide: 2-succinyl-6-hydroxy-2,4-cyclohexadiene-1-carboxylate synthase (272 aa).

This sequence belongs to the AB hydrolase superfamily. MenH family. Monomer.

It catalyses the reaction 5-enolpyruvoyl-6-hydroxy-2-succinyl-cyclohex-3-ene-1-carboxylate = (1R,6R)-6-hydroxy-2-succinyl-cyclohexa-2,4-diene-1-carboxylate + pyruvate. The protein operates within quinol/quinone metabolism; 1,4-dihydroxy-2-naphthoate biosynthesis; 1,4-dihydroxy-2-naphthoate from chorismate: step 3/7. Its pathway is quinol/quinone metabolism; menaquinone biosynthesis. Its function is as follows. Catalyzes a proton abstraction reaction that results in 2,5-elimination of pyruvate from 2-succinyl-5-enolpyruvyl-6-hydroxy-3-cyclohexene-1-carboxylate (SEPHCHC) and the formation of 2-succinyl-6-hydroxy-2,4-cyclohexadiene-1-carboxylate (SHCHC). The sequence is that of 2-succinyl-6-hydroxy-2,4-cyclohexadiene-1-carboxylate synthase from Yersinia pestis (strain Pestoides F).